Consider the following 661-residue polypeptide: Tegument protein UL46 homolog (661 aa).

Residues 1–31 (MFSRFARSFSSDDRTRKSYDGSYQSFNAGER) form a disordered region. Residues 10–19 (SSDDRTRKSY) are compositionally biased toward basic and acidic residues. 2 consecutive transmembrane segments (helical) span residues 299 to 319 (AGTG…TALL) and 339 to 359 (AAIV…QYLI).

The protein belongs to the herpesviridae HHV-1 VP11/12 protein family. In terms of processing, phosphorylated by host LCK. The phosphorylation seems to be lymphocyte-specific.

The protein resides in the virion tegument. It is found in the host cytoplasm. Its subcellular location is the host membrane. Functionally, plays a role in the activation of the host PI3K/AKT pathway to promote cell survival. Interacts with and activates PI3KR1 in order to phosphorylate host AKT on its activating residues. Activates the host AP-1 pathway by triggering phosphorylation of host ERK1/2. Participates in host BIM and BAD phosphorylation, leading to apoptosis inhibition. The polypeptide is Tegument protein UL46 homolog (Varicella-zoster virus (strain Oka vaccine) (HHV-3)).